The sequence spans 701 residues: Pseudouridylate synthase PUS7L (701 aa).

Serine 79 is modified (phosphoserine). The active-site Nucleophile is the aspartate 339. One can recognise a TRUD domain in the interval 424 to 647 (GFVNYYGPQR…PGCYRQILKH (224 aa)).

It belongs to the pseudouridine synthase TruD family.

It carries out the reaction a uridine in mRNA = a pseudouridine in mRNA. In terms of biological role, pseudouridine synthase that catalyzes pseudouridylation of mRNAs. The sequence is that of Pseudouridylate synthase PUS7L from Homo sapiens (Human).